The following is a 210-amino-acid chain: Floral homeotic protein FBP1 (210 aa).

The region spanning 3–57 is the MADS-box domain; sequence RGKIEIKRIENSSNRQVTYSKRRNGILKKAKEISVLCDARVSVIIFASSGKMHEF. The 92-residue stretch at 82–173 folds into the K-box domain; sequence HENLDNEINK…QLEIATMNRN (92 aa).

Petals.

It is found in the nucleus. Functionally, probable transcription factor. The chain is Floral homeotic protein FBP1 (FBP1) from Petunia hybrida (Petunia).